The primary structure comprises 291 residues: ATP synthase gamma chain (291 aa).

The protein belongs to the ATPase gamma chain family. In terms of assembly, F-type ATPases have 2 components, CF(1) - the catalytic core - and CF(0) - the membrane proton channel. CF(1) has five subunits: alpha(3), beta(3), gamma(1), delta(1), epsilon(1). CF(0) has three main subunits: a, b and c.

The protein resides in the cell membrane. Produces ATP from ADP in the presence of a proton gradient across the membrane. The gamma chain is believed to be important in regulating ATPase activity and the flow of protons through the CF(0) complex. This is ATP synthase gamma chain from Streptococcus equinus (Streptococcus bovis).